We begin with the raw amino-acid sequence, 439 residues long: Ribosomal protein uS12 methylthiotransferase RimO (439 aa).

The MTTase N-terminal domain occupies 7 to 119 (KQLCLISLGC…IDIMIAKKQN (113 aa)). Cys16, Cys50, Cys82, Cys151, Cys155, and Cys158 together coordinate [4Fe-4S] cluster. Positions 137 to 365 (TGSSVHAYVK…NKIALKHQNN (229 aa)) constitute a Radical SAM core domain.

The protein belongs to the methylthiotransferase family. RimO subfamily. [4Fe-4S] cluster serves as cofactor.

Its subcellular location is the cytoplasm. It carries out the reaction L-aspartate(89)-[ribosomal protein uS12]-hydrogen + (sulfur carrier)-SH + AH2 + 2 S-adenosyl-L-methionine = 3-methylsulfanyl-L-aspartate(89)-[ribosomal protein uS12]-hydrogen + (sulfur carrier)-H + 5'-deoxyadenosine + L-methionine + A + S-adenosyl-L-homocysteine + 2 H(+). Its function is as follows. Catalyzes the methylthiolation of an aspartic acid residue of ribosomal protein uS12. The polypeptide is Ribosomal protein uS12 methylthiotransferase RimO (Helicobacter pylori (strain Shi470)).